The sequence spans 407 residues: MQQKAFEESRYPWQESFENVAVCLPFRCPRCGDHTRFRSLSSLRAHLEFSHSYEERTLLTKCSLFPSLKDTDLVTSSELLKPGKLQSSGNVVKQKPSYVNLYSISHEHSKDRKPFEVVAERPVSYVQTYTAMDLRADSLDGPRSGPGLPTSDTKASFEAHVREKFNRMVEAVDRTIEKRIDKLTKELAQKTAELLEVRAAFVQLTQKKQEVQRRERALNRQVDVAVEMIAVLRQRLTESEEELLRKEEEVVTFNHFLEAAAEKEVQGKARLQDFIENLVQRVELAEKQLEYYQSQQASGFGHDLSGHVLTDISSNRKPKCLSRGHPHSVCNHSDLKAHFHPKGRNHLKKAKDDRASMQPAKAIHEQAESSRDLCRPPKKGELLGFGRKGNIRPKMAKKKPTAIVNII.

At Ser-16 the chain carries Phosphoserine. A C2H2-type; degenerate zinc finger spans residues 26 to 51; that stretch reads FRCPRCGDHTRFRSLSSLRAHLEFSH. Position 138 is a phosphoserine (Ser-138). A coiled-coil region spans residues 169-296; sequence VEAVDRTIEK…KQLEYYQSQQ (128 aa). Position 175 is a phosphothreonine (Thr-175). The disordered stretch occupies residues 347 to 392; the sequence is LKKAKDDRASMQPAKAIHEQAESSRDLCRPPKKGELLGFGRKGNIR. Basic and acidic residues predominate over residues 362–381; it reads AIHEQAESSRDLCRPPKKGE. The residue at position 369 (Ser-369) is a Phosphoserine.

As to quaternary structure, homodimers. Interacts with NDE1 and NDEL1. Interacts with DISC1. Interacts with PARP1. Interacts with MCRS1.

It localises to the cytoplasm. The protein localises to the cytoskeleton. The protein resides in the microtubule organizing center. Its subcellular location is the centrosome. Its function is as follows. Involved in the regulation of neurogenesis. Negatively regulates neurite outgrowth. Involved in the morphogenesis of basket cells in the somatosensory cortex during embryogenesis. Involved in the positive regulation of oligodendrocyte differentiation during postnatal growth. Involved in dendritic arborization, morphogenesis of spine density dendrite, and establishment of postsynaptic dendrite density in cortical pyramidal neurons. Involved in homologous recombination (HR) repair pathway. Required for proper resolution of DNA double-strand breaks (DSBs) by HR. Is required for recovery of stalled replication forks, and directly contributes to genomic stability. Interacts with PARP1 and mediates MRE11-dependent DNA end resection during replication fork recovery. Contributes to genomic stability by preventing telomere dysfunction. This is Protein ZNF365 (ZNF365) from Pongo abelii (Sumatran orangutan).